We begin with the raw amino-acid sequence, 673 residues long: Forkhead box protein O3 (673 aa).

The segment at methionine 1 to arginine 153 is disordered. Serine 30 bears the Phosphoserine; by AMPK mark. Threonine 32 carries the phosphothreonine; by PKB/AKT1 modification. Lysine 46 carries the post-translational modification N6-methyllysine. A compositionally biased stretch (acidic residues) spans isoleucine 57–aspartate 68. Over residues isoleucine 79–glycine 89 the composition is skewed to gly residues. Residues glycine 80–proline 108 form a required for mitochondrial import region. Lysine 149 bears the N6-methyllysine mark. Positions tryptophan 157–alanine 251 form a DNA-binding region, fork-head. At threonine 179 the chain carries Phosphothreonine; by AMPK. Serine 209 carries the post-translational modification Phosphoserine; by STK4/MST1. A Phosphoserine; by MAPKAPK5 modification is found at serine 215. Position 230 is an N6-methyllysine (lysine 230). Residues serine 231–glutamate 302 are disordered. Lysine 242 is modified (N6-acetyllysine). A Nuclear localization signal motif is present at residues lysine 242–lysine 259. Serine 253 carries the phosphoserine; by PKB/AKT1 and MAPKAPK5 modification. A compositionally biased stretch (basic residues) spans threonine 261–alanine 272. Residues lysine 262 and lysine 271 each carry the N6-methyllysine modification. Phosphoserine is present on residues serine 280 and serine 284. Polar residues predominate over residues aspartate 283–arginine 298. N6-methyllysine is present on lysine 290. At serine 294 the chain carries Phosphoserine. Serine 299 is modified (phosphoserine; by CaMK2A). The mediates interaction with CHUK/IKKA and IKBKB/IKKB stretch occupies residues serine 300 to glycine 673. Serine 311 carries the phosphoserine modification. A Phosphoserine; by SGK1 modification is found at serine 315. Residues serine 399 and serine 413 each carry the phosphoserine; by AMPK modification. Lysine 419 is modified (N6-methyllysine). Serine 421 is subject to Phosphoserine. The tract at residues histidine 536–leucine 587 is disordered. The segment covering alanine 549–threonine 582 has biased composition (polar residues). Residue serine 551 is modified to Phosphoserine; by MAPKAPK5. The residue at position 555 (serine 555) is a Phosphoserine; by AMPK and MAPKAPK5. Phosphoserine; by AMPK is present on residues serine 588 and serine 626. Serine 644 carries the post-translational modification Phosphoserine; by IKKB.

As to quaternary structure, upon metabolic stress, forms a complex composed of FOXO3, SIRT3 and mitochondrial RNA polymerase POLRMT; the complex is recruited to mtDNA in a SIRT3-dependent manner. Also forms a complex composed of FOXO3, SIRT3, TFAM and POLRMT. Interacts with SIRT2; the interaction occurs independently of SIRT2 deacetylase activity. Interacts with YWHAB/14-3-3-beta and YWHAZ/14-3-3-zeta, which are required for cytosolic sequestration. Upon oxidative stress, interacts with STK4/MST1, which disrupts interaction with YWHAB/14-3-3-beta and leads to nuclear translocation. Interacts with PIM1. Interacts with DDIT3/CHOP. Interacts (deacetylated form) with SKP2. Interacts with CHUK and IKBKB. Interacts with CAMK2A, CAMK2B and calcineurin A. Interacts with NUPR1; this interaction represses FOXO3 transactivation. In terms of processing, in the presence of survival factors such as IGF1, phosphorylated on Thr-32 and Ser-253 by AKT1/PKB. This phosphorylated form then interacts with 14-3-3 proteins and is retained in the cytoplasm. Survival factor withdrawal induces dephosphorylation and promotes translocation to the nucleus where the dephosphorylated protein induces transcription of target genes and triggers apoptosis. Although AKT1/PKB doesn't appear to phosphorylate Ser-315 directly, it may activate other kinases that trigger phosphorylation at this residue. Phosphorylated by STK4/MST1 on Ser-209 upon oxidative stress, which leads to dissociation from YWHAB/14-3-3-beta and nuclear translocation. Phosphorylated by PIM1. Phosphorylation by AMPK leads to the activation of transcriptional activity without affecting subcellular localization. In response to metabolic stress, phosphorylated by AMPK on Ser-30 which mediates FOXO3 mitochondrial translocation. Phosphorylation by MAPKAPK5 promotes nuclear localization and DNA-binding, leading to induction of miR-34b and miR-34c expression, 2 post-transcriptional regulators of MYC that bind to the 3'UTR of MYC transcript and prevent its translation. Phosphorylated by CHUK/IKKA and IKBKB/IKKB. TNF-induced inactivation of FOXO3 requires its phosphorylation at Ser-644 by IKBKB/IKKB which promotes FOXO3 retention in the cytoplasm, polyubiquitination and ubiquitin-mediated proteasomal degradation. May be dephosphorylated by calcineurin A on Ser-299 which abolishes FOXO3 transcriptional activity. In cancer cells, ERK mediated-phosphorylation of Ser-12 is required for mitochondrial translocation of FOXO3 in response to metabolic stress or chemotherapeutic agents. Phosphorylation at Ser-253 promotes its degradation by the proteasome. Dephosphorylation at Ser-253 by protein phosphatase 2A (PPP2CA) promotes its stabilization; interaction with PPP2CA is enhanced by AMBRA1. Post-translationally, deacetylation by SIRT1 or SIRT2 stimulates interaction of FOXO3 with SKP2 and facilitates SCF(SKP2)-mediated FOXO3 ubiquitination and proteasomal degradation. Deacetylation by SIRT2 stimulates FOXO3-mediated transcriptional activity in response to oxidative stress. Deacetylated by SIRT3. Deacetylation by SIRT3 stimulates FOXO3-mediated mtDNA transcriptional activity in response to metabolic stress. Heavily methylated by SET9 which decreases stability, while moderately increasing transcriptional activity. The main methylation site is Lys-271. Methylation doesn't affect subcellular location. In terms of processing, polyubiquitinated. Ubiquitinated by a SCF complex containing SKP2, leading to proteasomal degradation. Post-translationally, the N-terminus is cleaved following import into the mitochondrion. In terms of tissue distribution, ubiquitous.

Its subcellular location is the cytoplasm. It localises to the cytosol. It is found in the nucleus. The protein resides in the mitochondrion matrix. The protein localises to the mitochondrion outer membrane. Transcriptional activator that recognizes and binds to the DNA sequence 5'-[AG]TAAA[TC]A-3' and regulates different processes, such as apoptosis and autophagy. Acts as a positive regulator of autophagy in skeletal muscle: in starved cells, enters the nucleus following dephosphorylation and binds the promoters of autophagy genes, such as GABARAP1L, MAP1LC3B and ATG12, thereby activating their expression, resulting in proteolysis of skeletal muscle proteins. Triggers apoptosis in the absence of survival factors, including neuronal cell death upon oxidative stress. Participates in post-transcriptional regulation of MYC: following phosphorylation by MAPKAPK5, promotes induction of miR-34b and miR-34c expression, 2 post-transcriptional regulators of MYC that bind to the 3'UTR of MYC transcript and prevent its translation. In response to metabolic stress, translocates into the mitochondria where it promotes mtDNA transcription. In response to metabolic stress, translocates into the mitochondria where it promotes mtDNA transcription. Also acts as a key regulator of chondrogenic commitment of skeletal progenitor cells in response to lipid availability: when lipids levels are low, translocates to the nucleus and promotes expression of SOX9, which induces chondrogenic commitment and suppresses fatty acid oxidation. Also acts as a key regulator of regulatory T-cells (Treg) differentiation by activating expression of FOXP3. In Homo sapiens (Human), this protein is Forkhead box protein O3.